A 229-amino-acid chain; its full sequence is MSTWANLGLQDSASPLMEQLIFFHDHALLILVMITVLVGYLMVMLFFNSYVNRFLLHGQLIEMIWTILPAIILLFIAMPSLRLLYLLDEINEPSITLKSIGHQWYWSYEYSDFNDIEFDSYMIPTNELSNDGFRLLDVDNRIVLPMNSQIRILVTAADVIHSWTIPALGVKVDGTPGRLNQTNFFINRPGLFYGQCSEICGANHSFMPIVIESVPVNYFIKWISDKVNS.

The Mitochondrial intermembrane segment spans residues 1 to 26 (MSTWANLGLQDSASPLMEQLIFFHDH). A helical membrane pass occupies residues 27 to 48 (ALLILVMITVLVGYLMVMLFFN). Over 49-62 (SYVNRFLLHGQLIE) the chain is Mitochondrial matrix. A helical membrane pass occupies residues 63–82 (MIWTILPAIILLFIAMPSLR). At 83–229 (LLYLLDEINE…IKWISDKVNS (147 aa)) the chain is on the mitochondrial intermembrane side. The Cu cation site is built by His161, Cys196, Glu198, Cys200, His204, and Met207. Glu198 is a binding site for Mg(2+).

The protein belongs to the cytochrome c oxidase subunit 2 family. In terms of assembly, component of the cytochrome c oxidase (complex IV, CIV), a multisubunit enzyme composed of a catalytic core of 3 subunits and several supernumerary subunits. The complex exists as a monomer or a dimer and forms supercomplexes (SCs) in the inner mitochondrial membrane with ubiquinol-cytochrome c oxidoreductase (cytochrome b-c1 complex, complex III, CIII). The cofactor is Cu cation.

It localises to the mitochondrion inner membrane. The enzyme catalyses 4 Fe(II)-[cytochrome c] + O2 + 8 H(+)(in) = 4 Fe(III)-[cytochrome c] + 2 H2O + 4 H(+)(out). Functionally, component of the cytochrome c oxidase, the last enzyme in the mitochondrial electron transport chain which drives oxidative phosphorylation. The respiratory chain contains 3 multisubunit complexes succinate dehydrogenase (complex II, CII), ubiquinol-cytochrome c oxidoreductase (cytochrome b-c1 complex, complex III, CIII) and cytochrome c oxidase (complex IV, CIV), that cooperate to transfer electrons derived from NADH and succinate to molecular oxygen, creating an electrochemical gradient over the inner membrane that drives transmembrane transport and the ATP synthase. Cytochrome c oxidase is the component of the respiratory chain that catalyzes the reduction of oxygen to water. Electrons originating from reduced cytochrome c in the intermembrane space (IMS) are transferred via the dinuclear copper A center (CU(A)) of subunit 2 and heme A of subunit 1 to the active site in subunit 1, a binuclear center (BNC) formed by heme A3 and copper B (CU(B)). The BNC reduces molecular oxygen to 2 water molecules using 4 electrons from cytochrome c in the IMS and 4 protons from the mitochondrial matrix. This chain is Cytochrome c oxidase subunit 2 (mt:CoII), found in Drosophila subobscura (Fruit fly).